The sequence spans 177 residues: Bifunctional protein PyrR (177 aa).

The PRPP-binding signature appears at 99–111 (VVLVDDVLFTGRT).

The protein belongs to the purine/pyrimidine phosphoribosyltransferase family. PyrR subfamily.

It carries out the reaction UMP + diphosphate = 5-phospho-alpha-D-ribose 1-diphosphate + uracil. Regulates the transcription of the pyrimidine nucleotide (pyr) operon in response to exogenous pyrimidines. Functionally, also displays a weak uracil phosphoribosyltransferase activity which is not physiologically significant. In Citrifermentans bemidjiense (strain ATCC BAA-1014 / DSM 16622 / JCM 12645 / Bem) (Geobacter bemidjiensis), this protein is Bifunctional protein PyrR.